The chain runs to 379 residues: uncharacterized protein (379 aa).

The protein belongs to the herpesviridae US22 family.

This is an uncharacterized protein from Human cytomegalovirus (strain AD169) (HHV-5).